The sequence spans 430 residues: Adenylosuccinate synthetase (430 aa).

Residues 13–19 (GDEGKGK) and 41–43 (GHT) contribute to the GTP site. D14 acts as the Proton acceptor in catalysis. Mg(2+) contacts are provided by D14 and G41. IMP is bound by residues 14–17 (DEGK), 39–42 (NAGH), T130, R144, Q225, T240, and R304. H42 serves as the catalytic Proton donor. Residue 300-306 (ASTGRPR) coordinates substrate. GTP contacts are provided by residues R306, 332–334 (KLD), and 414–416 (STG).

It belongs to the adenylosuccinate synthetase family. Homodimer. Requires Mg(2+) as cofactor.

Its subcellular location is the cytoplasm. The enzyme catalyses IMP + L-aspartate + GTP = N(6)-(1,2-dicarboxyethyl)-AMP + GDP + phosphate + 2 H(+). Its pathway is purine metabolism; AMP biosynthesis via de novo pathway; AMP from IMP: step 1/2. In terms of biological role, plays an important role in the de novo pathway of purine nucleotide biosynthesis. Catalyzes the first committed step in the biosynthesis of AMP from IMP. This Xylella fastidiosa (strain M23) protein is Adenylosuccinate synthetase.